The following is a 105-amino-acid chain: MNPSEMQRKAPPRRRRHRNRAPLTHKMNKMVTSEEQMKLPSTKKAEPPTWAQLKKLTQLATKYLENTKVTQTPESMLLAALMIVSMVSAGVPNSSEETATIENGP.

Residues M1 to T49 form a disordered region. The segment covering A10 to R20 has biased composition (basic residues). The Nuclear localization signal signature appears at R13–R20. The short motif at W50–L59 is the Nuclear export signal element.

As to quaternary structure, forms homodimers, homotrimers, and homotetramers via a C-terminal domain. Associates with XPO1 and with ZNF145. Expressed at higher level in placenta, expressed at lower level in several organs and cell lines.

The protein resides in the cytoplasm. Its subcellular location is the nucleus. It is found in the nucleolus. Retroviral replication requires the nuclear export and translation of unspliced, singly-spliced and multiply-spliced derivatives of the initial genomic transcript. Rec interacts with a highly structured RNA element (RcRE) present in the viral 3'LTR and recruits the cellular nuclear export machinery. This permits export to the cytoplasm of unspliced genomic or incompletely spliced subgenomic viral transcripts. In Homo sapiens (Human), this protein is Endogenous retrovirus group K member 6 Rec protein (ERVK-6).